A 286-amino-acid chain; its full sequence is Polyamine aminopropyltransferase (286 aa).

The PABS domain maps to Thr-5–Asp-238. S-methyl-5'-thioadenosine is bound at residue Gln-33. Positions 64 and 88 each coordinate spermidine. S-methyl-5'-thioadenosine-binding positions include Glu-108 and Asp-140–Gly-141. The active-site Proton acceptor is the Asp-158. Asp-158–Asp-161 is a spermidine binding site. Pro-165 lines the S-methyl-5'-thioadenosine pocket.

It belongs to the spermidine/spermine synthase family. Homodimer or homotetramer.

It localises to the cytoplasm. The enzyme catalyses S-adenosyl 3-(methylsulfanyl)propylamine + putrescine = S-methyl-5'-thioadenosine + spermidine + H(+). It participates in amine and polyamine biosynthesis; spermidine biosynthesis; spermidine from putrescine: step 1/1. Functionally, catalyzes the irreversible transfer of a propylamine group from the amino donor S-adenosylmethioninamine (decarboxy-AdoMet) to putrescine (1,4-diaminobutane) to yield spermidine. The polypeptide is Polyamine aminopropyltransferase (Salmonella arizonae (strain ATCC BAA-731 / CDC346-86 / RSK2980)).